The primary structure comprises 520 residues: MSSSENTLLDGKSENTIRFLTFNVNGIRTFFHYQPFSQMNQSLRSVFDFFRADIITFQELKTEKLSISKWGRVDGFYSFISIPQTRKGYSGVGCWIRIPEKNHPLYHALQVVKAEEGITGYLTIKNGKHSAISYRNDVNQGIGGYDSLDPDLDEKSALELDSEGRCVMVELACGIVIISVYCPANSNSSEEGEMFRLRFLKVLLRRVRNLDKIGKKIVLMGDVNVCRDLIDSADTLEQFSIPITDPMGGTKLEAQYRDKAIQFIINPDTPHRRIFNQILADSLLPDASKRGILIDTTRLIQTRNRLKMYTVWNMLKNLRPSNYGSRIDFILVSLKLERCIKAADILPDILGSDHCPVYSDLDILDDRIEPGTTQVPIPKFEARYKYNLRNHNVLEMFAKKDTNKESNKQKYCVSKVMNTKKNSNIKNKSLDSFFQKVNGEKDDRIKESSEIPQQAKKRISTPKLNFKDVFGKPPLCRHGEESMLKTSKTSANPGRKFWICKRSRGDSNNTESSCGFFQWV.

E59 lines the Mg(2+) pocket. Residue Y181 is part of the active site. The Mg(2+) site is built by D222, N224, and D353. D222 serves as the catalytic Proton donor/acceptor. Zn(2+) is bound by residues C476, H478, C500, and C514. The GRF-type zinc-finger motif lies at 476-520 (CRHGEESMLKTSKTSANPGRKFWICKRSRGDSNNTESSCGFFQWV).

The protein belongs to the DNA repair enzymes AP/ExoA family. It depends on Mg(2+) as a cofactor. Requires Mn(2+) as cofactor.

It localises to the nucleus. The catalysed reaction is Exonucleolytic cleavage in the 3'- to 5'-direction to yield nucleoside 5'-phosphates.. Functionally, DNA repair enzyme that cleaves apurinic/apyrimidinic (AP) sites and removes 3'-blocking groups present at single strand breaks of damaged DNA. The chain is DNA-(apurinic or apyrimidinic site) endonuclease 2 (APN2) from Saccharomyces cerevisiae (strain ATCC 204508 / S288c) (Baker's yeast).